A 275-amino-acid chain; its full sequence is Elongation factor Ts (275 aa).

The segment at 80 to 83 is involved in Mg(2+) ion dislocation from EF-Tu; the sequence is TDFV.

The protein belongs to the EF-Ts family.

The protein localises to the cytoplasm. Functionally, associates with the EF-Tu.GDP complex and induces the exchange of GDP to GTP. It remains bound to the aminoacyl-tRNA.EF-Tu.GTP complex up to the GTP hydrolysis stage on the ribosome. The chain is Elongation factor Ts from Clavibacter sepedonicus (Clavibacter michiganensis subsp. sepedonicus).